The chain runs to 366 residues: 5-amino-6-(D-ribitylamino)uracil--L-tyrosine 4-hydroxyphenyl transferase (366 aa).

Residues 51 to 290 (RCGNAITWVK…MIAISRLFLD (240 aa)) form the Radical SAM core domain. Cys70, Cys74, and Cys77 together coordinate [4Fe-4S] cluster.

The protein belongs to the radical SAM superfamily. CofH family. In terms of assembly, consists of two subunits, CofG and CofH. Requires [4Fe-4S] cluster as cofactor.

It catalyses the reaction 5-amino-6-(D-ribitylamino)uracil + L-tyrosine + S-adenosyl-L-methionine = 5-amino-5-(4-hydroxybenzyl)-6-(D-ribitylimino)-5,6-dihydrouracil + 2-iminoacetate + 5'-deoxyadenosine + L-methionine + H(+). Its pathway is cofactor biosynthesis; coenzyme F0 biosynthesis. Catalyzes the radical-mediated synthesis of 5-amino-5-(4-hydroxybenzyl)-6-(D-ribitylimino)-5,6-dihydrouracil from 5-amino-6-(D-ribitylamino)uracil and L-tyrosine. The polypeptide is 5-amino-6-(D-ribitylamino)uracil--L-tyrosine 4-hydroxyphenyl transferase (Methanospirillum hungatei JF-1 (strain ATCC 27890 / DSM 864 / NBRC 100397 / JF-1)).